The primary structure comprises 209 residues: Hyperpolarization-activated voltage-gated potassium channel (209 aa).

The Cytoplasmic segment spans residues 1–10 (MNLKDRRLKK). Residues 11 to 31 (IMEVLSLIFTFEIVASFILST) form a helical membrane-spanning segment. Residues 32–38 (YNPPYQD) lie on the Extracellular side of the membrane. A helical transmembrane segment spans residues 39–59 (LLIKLDYISIMFFTFEFIYNF). The Cytoplasmic portion of the chain corresponds to 60-71 (YYVEDKAKFFKD). Residues 72 to 92 (IYNIVDAIVVIAFLLYSLQVF) traverse the membrane as a helical segment. Over 93–96 (YSKA) the chain is Extracellular. Residues 97–117 (FLGLRVINLLRILVLLRIIKL) traverse the membrane as a helical; Voltage-sensor segment. Residues 118 to 125 (RKLEENQA) are Cytoplasmic-facing. A helical transmembrane segment spans residues 126–146 (LINFLTLLTICFIASCLIWIV). Topologically, residues 147–181 (ESGVNPAINNFFDAFYFTTISITTVGYGDITPKTD) are extracellular. The short motif at 170-175 (TVGYGD) is the Selectivity filter element. Residues 182–202 (AGKLIIIFSVLFFISGLITSL) form a helical membrane-spanning segment. Residues 203–209 (QKALKGD) are Cytoplasmic-facing.

It belongs to the potassium channel family. As to quaternary structure, homotetramer.

It is found in the cell membrane. Its function is as follows. Voltage-gated potassium-selective channel opened by hyperpolarization. This Methanocaldococcus jannaschii (strain ATCC 43067 / DSM 2661 / JAL-1 / JCM 10045 / NBRC 100440) (Methanococcus jannaschii) protein is Hyperpolarization-activated voltage-gated potassium channel (mvp).